A 124-amino-acid chain; its full sequence is Glucagon-1 (124 aa).

The signal sequence occupies residues 1–25; sequence MKRIHSLAGILLVLGLIQSSCRVLM. Residues 28 to 54 are disordered; the sequence is ADPSSSLEADSTLKDEPRELSNMKRHS. The span at 38–54 shows a compositional bias: basic and acidic residues; sequence STLKDEPRELSNMKRHS. The propeptide occupies 84–88; sequence SGVAE.

The protein belongs to the glucagon family.

Its subcellular location is the secreted. Functionally, glucagon plays a key role in glucose metabolism and homeostasis. Regulates blood glucose by increasing gluconeogenesis and decreasing glycolysis. This chain is Glucagon-1 (gcg1), found in Lophius americanus (American angler).